Consider the following 940-residue polypeptide: Bifunctional uridylyltransferase/uridylyl-removing enzyme (940 aa).

A uridylyltransferase region spans residues 1–379 (MPRRLRPTRL…PGARPKRKAL (379 aa)). Residues 380–736 (DVEGFYEDGG…GQVRPGSNAA (357 aa)) form a uridylyl-removing region. In terms of domain architecture, HD spans 496–618 (VDEHTLRAVG…VENPERLRLL (123 aa)). 2 ACT domains span residues 737-821 (EVVI…PRRG) and 848-929 (VVEA…AARP).

The protein belongs to the GlnD family. Mg(2+) is required as a cofactor.

The catalysed reaction is [protein-PII]-L-tyrosine + UTP = [protein-PII]-uridylyl-L-tyrosine + diphosphate. It carries out the reaction [protein-PII]-uridylyl-L-tyrosine + H2O = [protein-PII]-L-tyrosine + UMP + H(+). With respect to regulation, uridylyltransferase (UTase) activity is inhibited by glutamine, while glutamine activates uridylyl-removing (UR) activity. In terms of biological role, modifies, by uridylylation and deuridylylation, the PII regulatory proteins (GlnB and homologs), in response to the nitrogen status of the cell that GlnD senses through the glutamine level. Under low glutamine levels, catalyzes the conversion of the PII proteins and UTP to PII-UMP and PPi, while under higher glutamine levels, GlnD hydrolyzes PII-UMP to PII and UMP (deuridylylation). Thus, controls uridylylation state and activity of the PII proteins, and plays an important role in the regulation of nitrogen assimilation and metabolism. This is Bifunctional uridylyltransferase/uridylyl-removing enzyme from Caulobacter vibrioides (strain ATCC 19089 / CIP 103742 / CB 15) (Caulobacter crescentus).